The primary structure comprises 340 residues: Glyceraldehyde-3-phosphate dehydrogenase (340 aa).

NAD(+) is bound by residues 11-12 (SI) and Gly111. A D-glyceraldehyde 3-phosphate-binding site is contributed by 140–142 (SCN). Cys141 acts as the Nucleophile in catalysis. Residue Arg169 coordinates NAD(+). 195 to 196 (HG) contributes to the D-glyceraldehyde 3-phosphate binding site. Gln303 is a binding site for NAD(+).

This sequence belongs to the glyceraldehyde-3-phosphate dehydrogenase family. As to quaternary structure, homotetramer.

It is found in the cytoplasm. The catalysed reaction is D-glyceraldehyde 3-phosphate + phosphate + NADP(+) = (2R)-3-phospho-glyceroyl phosphate + NADPH + H(+). It carries out the reaction D-glyceraldehyde 3-phosphate + phosphate + NAD(+) = (2R)-3-phospho-glyceroyl phosphate + NADH + H(+). The protein operates within carbohydrate degradation; glycolysis; pyruvate from D-glyceraldehyde 3-phosphate: step 1/5. This chain is Glyceraldehyde-3-phosphate dehydrogenase, found in Methanococcus vannielii (strain ATCC 35089 / DSM 1224 / JCM 13029 / OCM 148 / SB).